A 404-amino-acid chain; its full sequence is Multidrug resistance protein MdtG (404 aa).

Transmembrane regions (helical) follow at residues 19–39 (LGCFLTGAAFSLVMPFLPLYV), 56–76 (LVFSITFLFSAIASPFWGGLA), 90–110 (LGMAIVMLLMGMAQNIWQFLI), 113–133 (ALLGLLGGFIPNANALIATQV), 149–169 (GVSGALLGPLAGGLLAGHYGL), 171–191 (PVFFITASVLFICFLLTFFFI), 222–242 (LFVTTLIIQVATGSIAPILTL), 254–274 (IAFISGMIASVPGVAALLSAP), 288–308 (ILIVALIISVLLLIPMSFVQT), 317–337 (FLLGAADGALLPAVQTLLVYN), and 376–396 (AVFCVTAGVVLFNAIYSWNSL).

Belongs to the major facilitator superfamily. DHA1 family. MdtG (TC 2.A.1.2.20) subfamily.

It is found in the cell inner membrane. The protein is Multidrug resistance protein MdtG of Salmonella paratyphi C (strain RKS4594).